The following is a 216-amino-acid chain: Peptide methionine sulfoxide reductase MsrA (216 aa).

The active site involves cysteine 54.

It belongs to the MsrA Met sulfoxide reductase family.

The enzyme catalyses L-methionyl-[protein] + [thioredoxin]-disulfide + H2O = L-methionyl-(S)-S-oxide-[protein] + [thioredoxin]-dithiol. The catalysed reaction is [thioredoxin]-disulfide + L-methionine + H2O = L-methionine (S)-S-oxide + [thioredoxin]-dithiol. Functionally, has an important function as a repair enzyme for proteins that have been inactivated by oxidation. Catalyzes the reversible oxidation-reduction of methionine sulfoxide in proteins to methionine. This Xanthomonas campestris pv. phaseoli protein is Peptide methionine sulfoxide reductase MsrA.